The primary structure comprises 422 residues: 5'-deoxyadenosine deaminase (422 aa).

2 residues coordinate Zn(2+): H57 and H59. Residues E86 and H178 each contribute to the substrate site. H205 is a binding site for Zn(2+). Positions 208 and 294 each coordinate substrate. Residue D294 coordinates Zn(2+).

This sequence belongs to the metallo-dependent hydrolases superfamily. MTA/SAH deaminase family. As to quaternary structure, homotetramer. Zn(2+) is required as a cofactor.

It catalyses the reaction 5'-deoxyadenosine + H2O + H(+) = 5'-deoxyinosine + NH4(+). The enzyme catalyses S-adenosyl-L-homocysteine + H2O + H(+) = S-inosyl-L-homocysteine + NH4(+). The catalysed reaction is S-methyl-5'-thioadenosine + H2O + H(+) = S-methyl-5'-thioinosine + NH4(+). It carries out the reaction adenosine + H2O + H(+) = inosine + NH4(+). It functions in the pathway amino-acid biosynthesis; S-adenosyl-L-methionine biosynthesis. Its function is as follows. Catalyzes the deamination of three SAM-derived enzymatic products, namely 5'-deoxyadenosine, S-adenosyl-L-homocysteine, and 5'-methylthioadenosine, to produce the inosine analogs. Can also deaminate adenosine. The preferred substrate for this enzyme is 5'-deoxyadenosine, but all these substrates are efficiently deaminated. Likely functions in a S-adenosyl-L-methionine (SAM) recycling pathway from S-adenosyl-L-homocysteine (SAH) produced from SAM-dependent methylation reactions. May also be involved in the recycling of 5'-deoxyadenosine, whereupon the 5'-deoxyribose moiety of 5'-deoxyinosine is further metabolized to deoxyhexoses used for the biosynthesis of aromatic amino acids in methanogens. In Methanococcus maripaludis (strain DSM 14266 / JCM 13030 / NBRC 101832 / S2 / LL), this protein is 5'-deoxyadenosine deaminase.